The sequence spans 391 residues: Probable acridone synthase 4 (391 aa).

Residue C164 is part of the active site.

This sequence belongs to the thiolase-like superfamily. Chalcone/stilbene synthases family.

It catalyses the reaction N-methylanthraniloyl-CoA + 3 malonyl-CoA + 3 H(+) = 1,3-dihydroxy-N-methylacridone + 3 CO2 + 4 CoA + H2O. The polypeptide is Probable acridone synthase 4 (ACS4) (Ruta graveolens (Common rue)).